The following is a 331-amino-acid chain: Methionyl-tRNA formyltransferase (331 aa).

110–113 (SLLP) is a binding site for (6S)-5,6,7,8-tetrahydrofolate. Residues 312 to 331 (HAPAERVSAAGSPAGAGGAP) form a disordered region.

This sequence belongs to the Fmt family.

It carries out the reaction L-methionyl-tRNA(fMet) + (6R)-10-formyltetrahydrofolate = N-formyl-L-methionyl-tRNA(fMet) + (6S)-5,6,7,8-tetrahydrofolate + H(+). Its function is as follows. Attaches a formyl group to the free amino group of methionyl-tRNA(fMet). The formyl group appears to play a dual role in the initiator identity of N-formylmethionyl-tRNA by promoting its recognition by IF2 and preventing the misappropriation of this tRNA by the elongation apparatus. The chain is Methionyl-tRNA formyltransferase from Frankia alni (strain DSM 45986 / CECT 9034 / ACN14a).